Consider the following 344-residue polypeptide: tRNA N6-adenosine threonylcarbamoyltransferase (344 aa).

Residues His-110 and His-114 each contribute to the Fe cation site. Residues 133 to 137, Asp-166, Gly-179, and Asn-278 each bind substrate; that span reads VMSGA. Fe cation is bound at residue Asp-303.

This sequence belongs to the KAE1 / TsaD family. Requires Fe(2+) as cofactor.

The protein resides in the cytoplasm. It catalyses the reaction L-threonylcarbamoyladenylate + adenosine(37) in tRNA = N(6)-L-threonylcarbamoyladenosine(37) in tRNA + AMP + H(+). Its function is as follows. Required for the formation of a threonylcarbamoyl group on adenosine at position 37 (t(6)A37) in tRNAs that read codons beginning with adenine. Is involved in the transfer of the threonylcarbamoyl moiety of threonylcarbamoyl-AMP (TC-AMP) to the N6 group of A37, together with TsaE and TsaB. TsaD likely plays a direct catalytic role in this reaction. This Chlamydia felis (strain Fe/C-56) (Chlamydophila felis) protein is tRNA N6-adenosine threonylcarbamoyltransferase.